A 63-amino-acid chain; its full sequence is uncharacterized protein (63 aa).

The span at 1-17 shows a compositional bias: basic and acidic residues; sequence MRYTDSRKLTPETDANH. A disordered region spans residues 1–32; the sequence is MRYTDSRKLTPETDANHKTASPQPIRRISSQT. Residues 18 to 32 show a composition bias toward polar residues; it reads KTASPQPIRRISSQT.

This sequence to Y.enterocolitica HemP.

This is an uncharacterized protein from Escherichia coli (strain K12).